Here is a 406-residue protein sequence, read N- to C-terminus: Putative competence-damage inducible protein (406 aa).

This sequence belongs to the CinA family.

This Natranaerobius thermophilus (strain ATCC BAA-1301 / DSM 18059 / JW/NM-WN-LF) protein is Putative competence-damage inducible protein.